The chain runs to 307 residues: Putative oxidoreductase YceM (307 aa).

Belongs to the Gfo/Idh/MocA family.

This chain is Putative oxidoreductase YceM (yceM), found in Salmonella typhimurium (strain LT2 / SGSC1412 / ATCC 700720).